A 471-amino-acid polypeptide reads, in one-letter code: Serine hydroxymethyltransferase 4 (471 aa).

An N-acetylmethionine modification is found at M1. Residue S39 coordinates L-serine. Pemetrexed is bound by residues S39, Y59, and E61. Residues E61 and Y69 each coordinate L-serine. Residues 105–107, H134, S190, and H218 each bind pemetrexed; that span reads SGS. 2 residues coordinate L-serine: H218 and K244. K244 bears the N6-(pyridoxal phosphate)lysine mark. G290 contacts pemetrexed. K373 lines the methotrexate pocket. R389 provides a ligand contact to L-serine. R389 contributes to the pemetrexed binding site.

This sequence belongs to the SHMT family. As to quaternary structure, homotetramer. Interacts with UBP16. It depends on pyridoxal 5'-phosphate as a cofactor. Mostly expressed in flowers, less abundant in roots, inflorescence stems, and siliques, and barely detectable in leaves.

The protein resides in the cytoplasm. It catalyses the reaction (6R)-5,10-methylene-5,6,7,8-tetrahydrofolate + glycine + H2O = (6S)-5,6,7,8-tetrahydrofolate + L-serine. It participates in one-carbon metabolism; tetrahydrofolate interconversion. Inhibited by the antifolate drugs methotrexate and pemetrexed. Catalyzes the interconversion of serine and glycine with the conversion of tetrahydrofolate (THF) into 5,10-methylene-THF. This chain is Serine hydroxymethyltransferase 4, found in Arabidopsis thaliana (Mouse-ear cress).